The sequence spans 286 residues: Isopentenyl-diphosphate Delta-isomerase II (286 aa).

The 153-residue stretch at 104 to 256 (MLHRAFSVFL…GLKLSPWFRL (153 aa)) folds into the Nudix hydrolase domain. Residues cysteine 141 and glutamate 203 contribute to the active site.

This sequence belongs to the IPP isomerase type 1 family.

It carries out the reaction isopentenyl diphosphate = dimethylallyl diphosphate. It functions in the pathway isoprenoid biosynthesis; dimethylallyl diphosphate biosynthesis; dimethylallyl diphosphate from isopentenyl diphosphate: step 1/1. It participates in porphyrin-containing compound metabolism; chlorophyll biosynthesis. Its function is as follows. Catalyzes the 1,3-allylic rearrangement of the homoallylic substrate isopentenyl (IPP) to its highly electrophilic allylic isomer, dimethylallyl diphosphate (DMAPP). The chain is Isopentenyl-diphosphate Delta-isomerase II (IPI2) from Clarkia breweri (Fairy fans).